Consider the following 136-residue polypeptide: NADPH-dependent 7-cyano-7-deazaguanine reductase (136 aa).

C50 (thioimide intermediate) is an active-site residue. The active-site Proton donor is the D57. Substrate-binding positions include 72–74 (YEL) and 91–92 (HE).

The protein belongs to the GTP cyclohydrolase I family. QueF type 1 subfamily.

It localises to the cytoplasm. It carries out the reaction 7-aminomethyl-7-carbaguanine + 2 NADP(+) = 7-cyano-7-deazaguanine + 2 NADPH + 3 H(+). Its pathway is tRNA modification; tRNA-queuosine biosynthesis. Functionally, catalyzes the NADPH-dependent reduction of 7-cyano-7-deazaguanine (preQ0) to 7-aminomethyl-7-deazaguanine (preQ1). This Prochlorococcus marinus (strain MIT 9301) protein is NADPH-dependent 7-cyano-7-deazaguanine reductase.